We begin with the raw amino-acid sequence, 198 residues long: Clytin (198 aa).

A propeptide spanning residues 1-9 (MADTASKYA) is cleaved from the precursor. EF-hand domains follow at residues 20 to 55 (KWVN…DICA), 60 to 95 (TPEQ…VDGW), 119 to 148 (EAVF…SGIC), and 149 to 184 (SSDE…FWYT). Ca(2+) is bound by residues Asp-33, Asn-35, Asp-37, Lys-39, and Glu-44. 10 residues coordinate Ca(2+): Asp-126, Asp-128, Ser-130, Ser-132, Glu-137, Asp-162, Asp-164, Ser-166, Lys-168, and Glu-173.

The protein belongs to the aequorin family.

In terms of biological role, ca(2+)-dependent bioluminescence photoprotein. Displays an emission peak at 470 nm (blue light). Trace amounts of calcium ion trigger the intramolecular oxidation of the chromophore, coelenterazine into coelenteramide and CO(2) with the concomitant emission of light. This chain is Clytin, found in Clytia gregaria (Gregarious jellyfish).